The primary structure comprises 176 residues: Urease accessory protein UreE (176 aa).

The tract at residues 134–176 (FTPEGGAYGHGRTHAHEHGHTNHHGQHHDHADHGHSHDHSHDQ) is disordered. Residues 161-176 (HDHADHGHSHDHSHDQ) show a composition bias toward basic and acidic residues.

This sequence belongs to the UreE family.

Its subcellular location is the cytoplasm. Its function is as follows. Involved in urease metallocenter assembly. Binds nickel. Probably functions as a nickel donor during metallocenter assembly. The sequence is that of Urease accessory protein UreE from Ruegeria sp. (strain TM1040) (Silicibacter sp.).